The following is a 536-amino-acid chain: CTP synthase (536 aa).

Residues 1-267 (MTKYIFVTGG…DQIVCDHLKL (267 aa)) are amidoligase domain. S13 lines the CTP pocket. S13 serves as a coordination point for UTP. An ATP-binding site is contributed by 14-19 (SIGKGI). Y54 serves as a coordination point for L-glutamine. D71 lines the ATP pocket. Mg(2+) is bound by residues D71 and E141. Residues 148-150 (DIE), 188-193 (KTKPTQ), and K224 contribute to the CTP site. UTP is bound by residues 188–193 (KTKPTQ) and K224. Residues 292-535 (KIALVGKYVE…ITAAVENSQA (244 aa)) form the Glutamine amidotransferase type-1 domain. G354 is a binding site for L-glutamine. The active-site Nucleophile; for glutamine hydrolysis is C381. Residues 382-385 (LGMQ), E405, and R463 each bind L-glutamine. Active-site residues include H508 and E510.

This sequence belongs to the CTP synthase family. In terms of assembly, homotetramer.

It catalyses the reaction UTP + L-glutamine + ATP + H2O = CTP + L-glutamate + ADP + phosphate + 2 H(+). The catalysed reaction is L-glutamine + H2O = L-glutamate + NH4(+). The enzyme catalyses UTP + NH4(+) + ATP = CTP + ADP + phosphate + 2 H(+). It functions in the pathway pyrimidine metabolism; CTP biosynthesis via de novo pathway; CTP from UDP: step 2/2. Its activity is regulated as follows. Allosterically activated by GTP, when glutamine is the substrate; GTP has no effect on the reaction when ammonia is the substrate. The allosteric effector GTP functions by stabilizing the protein conformation that binds the tetrahedral intermediate(s) formed during glutamine hydrolysis. Inhibited by the product CTP, via allosteric rather than competitive inhibition. In terms of biological role, catalyzes the ATP-dependent amination of UTP to CTP with either L-glutamine or ammonia as the source of nitrogen. Regulates intracellular CTP levels through interactions with the four ribonucleotide triphosphates. This chain is CTP synthase, found in Streptococcus mutans serotype c (strain ATCC 700610 / UA159).